Reading from the N-terminus, the 307-residue chain is tRNA pseudouridine synthase B (307 aa).

Catalysis depends on Asp-48, which acts as the Nucleophile.

Belongs to the pseudouridine synthase TruB family. Type 1 subfamily.

The catalysed reaction is uridine(55) in tRNA = pseudouridine(55) in tRNA. In terms of biological role, responsible for synthesis of pseudouridine from uracil-55 in the psi GC loop of transfer RNAs. In Pasteurella multocida (strain Pm70), this protein is tRNA pseudouridine synthase B.